Consider the following 471-residue polypeptide: UDP-N-acetylmuramate--L-alanine ligase (471 aa).

Residue 114-120 participates in ATP binding; it reads GTHGKTT.

This sequence belongs to the MurCDEF family.

It localises to the cytoplasm. The enzyme catalyses UDP-N-acetyl-alpha-D-muramate + L-alanine + ATP = UDP-N-acetyl-alpha-D-muramoyl-L-alanine + ADP + phosphate + H(+). It participates in cell wall biogenesis; peptidoglycan biosynthesis. In terms of biological role, cell wall formation. In Methylobacterium nodulans (strain LMG 21967 / CNCM I-2342 / ORS 2060), this protein is UDP-N-acetylmuramate--L-alanine ligase.